Reading from the N-terminus, the 416-residue chain is Multifunctional CCA protein (416 aa).

ATP is bound by residues G8 and R11. CTP-binding residues include G8 and R11. E21 and D23 together coordinate Mg(2+). Positions 91, 137, and 140 each coordinate ATP. CTP is bound by residues R91, R137, and R140. Positions 228–329 constitute an HD domain; the sequence is TGIHTLMVLK…LKLFDAVDAW (102 aa).

The protein belongs to the tRNA nucleotidyltransferase/poly(A) polymerase family. Bacterial CCA-adding enzyme type 1 subfamily. In terms of assembly, monomer. Can also form homodimers and oligomers. Mg(2+) is required as a cofactor. Ni(2+) serves as cofactor.

The catalysed reaction is a tRNA precursor + 2 CTP + ATP = a tRNA with a 3' CCA end + 3 diphosphate. It carries out the reaction a tRNA with a 3' CCA end + 2 CTP + ATP = a tRNA with a 3' CCACCA end + 3 diphosphate. Functionally, catalyzes the addition and repair of the essential 3'-terminal CCA sequence in tRNAs without using a nucleic acid template. Adds these three nucleotides in the order of C, C, and A to the tRNA nucleotide-73, using CTP and ATP as substrates and producing inorganic pyrophosphate. tRNA 3'-terminal CCA addition is required both for tRNA processing and repair. Also involved in tRNA surveillance by mediating tandem CCA addition to generate a CCACCA at the 3' terminus of unstable tRNAs. While stable tRNAs receive only 3'-terminal CCA, unstable tRNAs are marked with CCACCA and rapidly degraded. This is Multifunctional CCA protein from Photorhabdus laumondii subsp. laumondii (strain DSM 15139 / CIP 105565 / TT01) (Photorhabdus luminescens subsp. laumondii).